The sequence spans 188 residues: Nicotinamide-nucleotide adenylyltransferase (188 aa).

The protein belongs to the archaeal NMN adenylyltransferase family.

Its subcellular location is the cytoplasm. It carries out the reaction beta-nicotinamide D-ribonucleotide + ATP + H(+) = diphosphate + NAD(+). It participates in cofactor biosynthesis; NAD(+) biosynthesis; NAD(+) from nicotinamide D-ribonucleotide: step 1/1. In Thermococcus kodakarensis (strain ATCC BAA-918 / JCM 12380 / KOD1) (Pyrococcus kodakaraensis (strain KOD1)), this protein is Nicotinamide-nucleotide adenylyltransferase.